A 149-amino-acid polypeptide reads, in one-letter code: D-aminoacyl-tRNA deacylase (149 aa).

Residues glycine 137 to proline 138 carry the Gly-cisPro motif, important for rejection of L-amino acids motif.

Belongs to the DTD family. Homodimer.

It is found in the cytoplasm. It catalyses the reaction glycyl-tRNA(Ala) + H2O = tRNA(Ala) + glycine + H(+). The enzyme catalyses a D-aminoacyl-tRNA + H2O = a tRNA + a D-alpha-amino acid + H(+). Its function is as follows. An aminoacyl-tRNA editing enzyme that deacylates mischarged D-aminoacyl-tRNAs. Also deacylates mischarged glycyl-tRNA(Ala), protecting cells against glycine mischarging by AlaRS. Acts via tRNA-based rather than protein-based catalysis; rejects L-amino acids rather than detecting D-amino acids in the active site. By recycling D-aminoacyl-tRNA to D-amino acids and free tRNA molecules, this enzyme counteracts the toxicity associated with the formation of D-aminoacyl-tRNA entities in vivo and helps enforce protein L-homochirality. This chain is D-aminoacyl-tRNA deacylase, found in Paracoccus denitrificans (strain Pd 1222).